The chain runs to 329 residues: DNA-directed RNA polymerase subunit alpha (329 aa).

Residues 1–234 (MSGSVTEFLK…EQLDAFVELR (234 aa)) are alpha N-terminal domain (alpha-NTD). An alpha C-terminal domain (alpha-CTD) region spans residues 248–329 (FDPILLRPVD…WPPESIAEKD (82 aa)).

The protein belongs to the RNA polymerase alpha chain family. In terms of assembly, homodimer. The RNAP catalytic core consists of 2 alpha, 1 beta, 1 beta' and 1 omega subunit. When a sigma factor is associated with the core the holoenzyme is formed, which can initiate transcription.

It catalyses the reaction RNA(n) + a ribonucleoside 5'-triphosphate = RNA(n+1) + diphosphate. Its function is as follows. DNA-dependent RNA polymerase catalyzes the transcription of DNA into RNA using the four ribonucleoside triphosphates as substrates. In Pseudoalteromonas atlantica (strain T6c / ATCC BAA-1087), this protein is DNA-directed RNA polymerase subunit alpha.